The primary structure comprises 109 residues: Iron-sulfur cluster assembly protein CyaY (109 aa).

This sequence belongs to the frataxin family.

Functionally, involved in iron-sulfur (Fe-S) cluster assembly. May act as a regulator of Fe-S biogenesis. The chain is Iron-sulfur cluster assembly protein CyaY from Acidovorax ebreus (strain TPSY) (Diaphorobacter sp. (strain TPSY)).